The primary structure comprises 202 residues: Probable nicotinate-nucleotide adenylyltransferase (202 aa).

The protein belongs to the NadD family.

It carries out the reaction nicotinate beta-D-ribonucleotide + ATP + H(+) = deamido-NAD(+) + diphosphate. The protein operates within cofactor biosynthesis; NAD(+) biosynthesis; deamido-NAD(+) from nicotinate D-ribonucleotide: step 1/1. Functionally, catalyzes the reversible adenylation of nicotinate mononucleotide (NaMN) to nicotinic acid adenine dinucleotide (NaAD). The polypeptide is Probable nicotinate-nucleotide adenylyltransferase (Bacteroides thetaiotaomicron (strain ATCC 29148 / DSM 2079 / JCM 5827 / CCUG 10774 / NCTC 10582 / VPI-5482 / E50)).